The sequence spans 270 residues: Bis(5'-nucleosyl)-tetraphosphatase, symmetrical (270 aa).

It belongs to the Ap4A hydrolase family.

The catalysed reaction is P(1),P(4)-bis(5'-adenosyl) tetraphosphate + H2O = 2 ADP + 2 H(+). Hydrolyzes diadenosine 5',5'''-P1,P4-tetraphosphate to yield ADP. This chain is Bis(5'-nucleosyl)-tetraphosphatase, symmetrical, found in Thioalkalivibrio sulfidiphilus (strain HL-EbGR7).